Consider the following 270-residue polypeptide: 5'-AMP-activated protein kinase subunit beta-1 (270 aa).

The disordered stretch occupies residues 1–43 (MGNTSSERAALERQAGHKTPRRDSSGGTKDGDRPKILMDSPED). Residue glycine 2 is the site of N-myristoyl glycine attachment. The residue at position 4 (threonine 4) is a Phosphothreonine. Phosphoserine occurs at positions 5 and 6. Positions 9-36 (AALERQAGHKTPRRDSSGGTKDGDRPKI) are enriched in basic and acidic residues. Threonine 19 is subject to Phosphothreonine. A phosphoserine; by autocatalysis mark is found at serine 24 and serine 25. 3 positions are modified to phosphoserine: serine 40, serine 96, and serine 101. The tract at residues 68–163 (EVNEKAPAQA…QVKKTDFEVF (96 aa)) is glycogen-binding domain. Residue serine 108 is modified to Phosphoserine; by autocatalysis. Threonine 148 is modified (phosphothreonine). Position 182 is a phosphoserine (serine 182). Lysine 201 bears the N6-succinyllysine mark.

It belongs to the 5'-AMP-activated protein kinase beta subunit family. AMPK is a heterotrimer of an alpha catalytic subunit (PRKAA1 or PRKAA2), a beta (PRKAB1 or PRKAB2) and a gamma non-catalytic subunits (PRKAG1, PRKAG2 or PRKAG3). Interacts with FNIP1 and FNIP2. In terms of processing, phosphorylated when associated with the catalytic subunit (PRKAA1 or PRKAA2). Phosphorylated by ULK1; leading to negatively regulate AMPK activity and suggesting the existence of a regulatory feedback loop between ULK1 and AMPK. As to expression, highly expressed in kidney, heart, white adipose tissue, lung and spleen.

Its function is as follows. Non-catalytic subunit of AMP-activated protein kinase (AMPK), an energy sensor protein kinase that plays a key role in regulating cellular energy metabolism. In response to reduction of intracellular ATP levels, AMPK activates energy-producing pathways and inhibits energy-consuming processes: inhibits protein, carbohydrate and lipid biosynthesis, as well as cell growth and proliferation. AMPK acts via direct phosphorylation of metabolic enzymes, and by longer-term effects via phosphorylation of transcription regulators. Also acts as a regulator of cellular polarity by remodeling the actin cytoskeleton; probably by indirectly activating myosin. Beta non-catalytic subunit acts as a scaffold on which the AMPK complex assembles, via its C-terminus that bridges alpha (PRKAA1 or PRKAA2) and gamma subunits (PRKAG1, PRKAG2 or PRKAG3). The polypeptide is 5'-AMP-activated protein kinase subunit beta-1 (Prkab1) (Rattus norvegicus (Rat)).